The primary structure comprises 423 residues: O-methyltransferase aoiF (423 aa).

Aspartate 273 contacts S-adenosyl-L-methionine. Histidine 324 serves as the catalytic Proton acceptor.

Belongs to the class I-like SAM-binding methyltransferase superfamily. Cation-independent O-methyltransferase family.

Its pathway is secondary metabolite biosynthesis. Its function is as follows. O-methyltransferase; part of the gene cluster that mediates the biosynthesis of a methylated derivative of known natural products orthosporin and diaporthin. Within the pathway, aoiF catalyzes the biotransformation of orthosporin to diaporthin but also of diaporthin to the final product, by performing a tandem methylation of the polyketide core. Orthosporin is produced by an oxidoreductase that has still to be identified and that catalyzes the stereospecific reduction of the carbonyl moiety of the hexaketide isocoumarin scaffold produced by the non-reducing polyketide synthase aoiG to generate the S-configured secondary alcohol at C-11. The polypeptide is O-methyltransferase aoiF (Aspergillus oryzae (strain ATCC 42149 / RIB 40) (Yellow koji mold)).